Reading from the N-terminus, the 317-residue chain is Olfactory receptor 2F2 (317 aa).

Residues M1 to I25 lie on the Extracellular side of the membrane. A glycan (N-linked (GlcNAc...) asparagine) is linked at N5. The chain crosses the membrane as a helical span at residues S26–I49. Residues R50–T57 are Cytoplasmic-facing. A helical membrane pass occupies residues P58–P79. Residues Q80–Q100 are Extracellular-facing. C97 and C189 are oxidised to a cystine. Residues L101–Y120 form a helical membrane-spanning segment. Residues D121 to G139 are Cytoplasmic-facing. The chain crosses the membrane as a helical span at residues L140–V158. Residues Q159–N195 are Extracellular-facing. Residues E196–I219 traverse the membrane as a helical segment. Over R220–K236 the chain is Cytoplasmic. A helical transmembrane segment spans residues A237–Y259. At I260–K272 the chain is on the extracellular side. The chain crosses the membrane as a helical span at residues L273 to L292. Over R293 to T317 the chain is Cytoplasmic.

This sequence belongs to the G-protein coupled receptor 1 family.

It is found in the cell membrane. Its function is as follows. Odorant receptor. The chain is Olfactory receptor 2F2 (OR2F2) from Homo sapiens (Human).